Consider the following 512-residue polypeptide: Aldehyde dehydrogenase B (512 aa).

Active-site residues include glutamate 268 and cysteine 307.

Homotetramer.

It carries out the reaction an aldehyde + NADP(+) + H2O = a carboxylate + NADPH + 2 H(+). It catalyses the reaction acetaldehyde + NADP(+) + H2O = acetate + NADPH + 2 H(+). The enzyme catalyses chloroacetaldehyde + NADP(+) + H2O = chloroacetate + NADPH + 2 H(+). The catalysed reaction is propanal + NADP(+) + H2O = propanoate + NADPH + 2 H(+). Magnesium increases enzyme activity with various substrates. Its function is as follows. Catalyzes the NADP(+)-dependent oxidation of diverse aldehydes to their corresponding carboxylic acids, with a preference for acetaldehyde and chloroacetaldehyde. May play a role in detoxifying aldehydes present during stationary phase. Cannot use NAD(+) instead of NADP(+) as the electron acceptor. To a lesser extent is also able to oxidize propionaldehyde (propanal), benzaldehyde, mafosfamide, and 4-hydroperoxycyclophosphamide. Does not use either glyceraldehyde or glycolaldehyde as substrates. This Escherichia coli (strain K12) protein is Aldehyde dehydrogenase B.